We begin with the raw amino-acid sequence, 60 residues long: Potassium channel toxin alpha-KTx 3.6 (60 aa).

The N-terminal stretch at 1-22 (MKVFFAVLITLFICSMIIGIHG) is a signal peptide. Intrachain disulfides connect cysteine 29–cysteine 49, cysteine 35–cysteine 54, and cysteine 39–cysteine 56. Lysine 59 is subject to Lysine amide.

It belongs to the short scorpion toxin superfamily. Potassium channel inhibitor family. Alpha-KTx 03 subfamily. As to expression, expressed by the venom gland.

It localises to the secreted. Blocks voltage-gated potassium channels. At 2 uM, blocks rat Kv1.1/KCNA1 and Kv1.3/KCNA3, has a strong effect on rat Kv1.2/KCNA2 and Kv1.6/KCNA6 as well as a moderate effect on Shaker IR. The chain is Potassium channel toxin alpha-KTx 3.6 from Olivierus martensii (Manchurian scorpion).